A 229-amino-acid polypeptide reads, in one-letter code: DNA mismatch repair protein MutH (229 aa).

The protein belongs to the MutH family.

The protein localises to the cytoplasm. Functionally, sequence-specific endonuclease that cleaves unmethylated GATC sequences. It is involved in DNA mismatch repair. This is DNA mismatch repair protein MutH from Escherichia coli O127:H6 (strain E2348/69 / EPEC).